Reading from the N-terminus, the 355-residue chain is 45 kDa calcium-binding protein (355 aa).

The signal sequence occupies residues 1–29 (MASRQAPLCGLAPCCLWLLGVVLLMNASA). N33 carries an N-linked (GlcNAc...) asparagine glycan. EF-hand domains are found at residues 91–126 (KSRR…KTAE) and 130–165 (EAVA…TKGH). S92 carries the post-translational modification Phosphoserine. 10 residues coordinate Ca(2+): D104, N106, D108, R110, E115, D143, D145, D147, H149, and E154. A phosphothreonine mark is found at T186 and T210. EF-hand domains lie at 226-261 (MLQF…TVEN), 271-306 (WVRD…MNEF), and 307-342 (SALN…FTGS). The Ca(2+) site is built by D239, D241, D243, K245, and E250. The residue at position 258 (T258) is a Phosphothreonine. D284, N286, and D288 together coordinate Ca(2+). T292 carries the phosphothreonine modification. Positions 295, 320, 322, 324, 326, and 331 each coordinate Ca(2+). The tract at residues 302 to 355 (PMNEFSALNEAKQMIAIADENQNHYLEPEEVLKYSEFFTGSKLVDYARSVHEEF) is necessary for intracellular retention in Golgi apparatus lumen.

Belongs to the CREC family.

Its subcellular location is the golgi apparatus lumen. May regulate calcium-dependent activities in the endoplasmic reticulum lumen or post-ER compartment. The polypeptide is 45 kDa calcium-binding protein (SDF4) (Bos taurus (Bovine)).